The primary structure comprises 453 residues: Ribulose bisphosphate carboxylase large chain (453 aa).

A propeptide spanning residues 1-2 is cleaved from the precursor; it reads MS. An N-acetylproline modification is found at Pro3. Lys14 carries the post-translational modification N6,N6,N6-trimethyllysine. Positions 123 and 173 each coordinate substrate. Lys175 serves as the catalytic Proton acceptor. Lys177 provides a ligand contact to substrate. Mg(2+) is bound by residues Lys201, Asp203, and Glu204. Lys201 carries the post-translational modification N6-carboxylysine. The active-site Proton acceptor is His294. Positions 295, 327, and 379 each coordinate substrate.

It belongs to the RuBisCO large chain family. Type I subfamily. As to quaternary structure, heterohexadecamer of 8 large chains and 8 small chains; disulfide-linked. The disulfide link is formed within the large subunit homodimers. Requires Mg(2+) as cofactor. Post-translationally, the disulfide bond which can form in the large chain dimeric partners within the hexadecamer appears to be associated with oxidative stress and protein turnover.

The protein resides in the plastid. It localises to the chloroplast. It catalyses the reaction 2 (2R)-3-phosphoglycerate + 2 H(+) = D-ribulose 1,5-bisphosphate + CO2 + H2O. The enzyme catalyses D-ribulose 1,5-bisphosphate + O2 = 2-phosphoglycolate + (2R)-3-phosphoglycerate + 2 H(+). RuBisCO catalyzes two reactions: the carboxylation of D-ribulose 1,5-bisphosphate, the primary event in carbon dioxide fixation, as well as the oxidative fragmentation of the pentose substrate in the photorespiration process. Both reactions occur simultaneously and in competition at the same active site. This Galium elongatum (Great marsh bedstraw) protein is Ribulose bisphosphate carboxylase large chain.